The primary structure comprises 459 residues: Ribulose bisphosphate carboxylase large chain (459 aa).

At Lys4 the chain carries N6,N6,N6-trimethyllysine. Asn113 and Thr163 together coordinate substrate. Residue Lys165 is the Proton acceptor of the active site. Lys167 is a binding site for substrate. 3 residues coordinate Mg(2+): Lys191, Asp193, and Glu194. Lys191 is subject to N6-carboxylysine. The Proton acceptor role is filled by His284. Substrate-binding residues include Arg285, His317, and Ser369.

It belongs to the RuBisCO large chain family. Type I subfamily. As to quaternary structure, heterohexadecamer of 8 large chains and 8 small chains; disulfide-linked. The disulfide link is formed within the large subunit homodimers. Mg(2+) is required as a cofactor. Post-translationally, the disulfide bond which can form in the large chain dimeric partners within the hexadecamer appears to be associated with oxidative stress and protein turnover.

It is found in the plastid. The protein resides in the chloroplast. The enzyme catalyses 2 (2R)-3-phosphoglycerate + 2 H(+) = D-ribulose 1,5-bisphosphate + CO2 + H2O. It catalyses the reaction D-ribulose 1,5-bisphosphate + O2 = 2-phosphoglycolate + (2R)-3-phosphoglycerate + 2 H(+). In terms of biological role, ruBisCO catalyzes two reactions: the carboxylation of D-ribulose 1,5-bisphosphate, the primary event in carbon dioxide fixation, as well as the oxidative fragmentation of the pentose substrate in the photorespiration process. Both reactions occur simultaneously and in competition at the same active site. This chain is Ribulose bisphosphate carboxylase large chain, found in Ceratopetalum gummiferum (New South Wales Christmas bush).